Reading from the N-terminus, the 237-residue chain is Phosphoribosylaminoimidazole-succinocarboxamide synthase (237 aa).

Belongs to the SAICAR synthetase family.

The catalysed reaction is 5-amino-1-(5-phospho-D-ribosyl)imidazole-4-carboxylate + L-aspartate + ATP = (2S)-2-[5-amino-1-(5-phospho-beta-D-ribosyl)imidazole-4-carboxamido]succinate + ADP + phosphate + 2 H(+). It functions in the pathway purine metabolism; IMP biosynthesis via de novo pathway; 5-amino-1-(5-phospho-D-ribosyl)imidazole-4-carboxamide from 5-amino-1-(5-phospho-D-ribosyl)imidazole-4-carboxylate: step 1/2. The chain is Phosphoribosylaminoimidazole-succinocarboxamide synthase from Shigella dysenteriae serotype 1 (strain Sd197).